The chain runs to 299 residues: Glycine--tRNA ligase alpha subunit (299 aa).

This sequence belongs to the class-II aminoacyl-tRNA synthetase family. Tetramer of two alpha and two beta subunits.

The protein resides in the cytoplasm. The enzyme catalyses tRNA(Gly) + glycine + ATP = glycyl-tRNA(Gly) + AMP + diphosphate. This Dictyoglomus turgidum (strain DSM 6724 / Z-1310) protein is Glycine--tRNA ligase alpha subunit.